Here is a 580-residue protein sequence, read N- to C-terminus: NADH-quinone oxidoreductase subunit C/D (580 aa).

The interval 1–171 (MSLDQAIPEA…PPFVLTDRLF (171 aa)) is NADH dehydrogenase I subunit C. Residues 195–580 (ELMVLNFGPH…IDFVMSDVDR (386 aa)) are NADH dehydrogenase I subunit D.

The protein in the N-terminal section; belongs to the complex I 30 kDa subunit family. It in the C-terminal section; belongs to the complex I 49 kDa subunit family. NDH-1 is composed of 13 different subunits. Subunits NuoB, CD, E, F, and G constitute the peripheral sector of the complex.

The protein localises to the cell inner membrane. The enzyme catalyses a quinone + NADH + 5 H(+)(in) = a quinol + NAD(+) + 4 H(+)(out). Functionally, NDH-1 shuttles electrons from NADH, via FMN and iron-sulfur (Fe-S) centers, to quinones in the respiratory chain. The immediate electron acceptor for the enzyme in this species is believed to be ubiquinone. Couples the redox reaction to proton translocation (for every two electrons transferred, four hydrogen ions are translocated across the cytoplasmic membrane), and thus conserves the redox energy in a proton gradient. In Cereibacter sphaeroides (strain ATCC 17029 / ATH 2.4.9) (Rhodobacter sphaeroides), this protein is NADH-quinone oxidoreductase subunit C/D.